We begin with the raw amino-acid sequence, 224 residues long: tRNA (guanine-N(7)-)-methyltransferase (224 aa).

Residues E45, E70, D97, and D119 each coordinate S-adenosyl-L-methionine. Residue D119 is part of the active site. Substrate is bound by residues K123, D155, and 199–202 (TEYE).

This sequence belongs to the class I-like SAM-binding methyltransferase superfamily. TrmB family.

The catalysed reaction is guanosine(46) in tRNA + S-adenosyl-L-methionine = N(7)-methylguanosine(46) in tRNA + S-adenosyl-L-homocysteine. It participates in tRNA modification; N(7)-methylguanine-tRNA biosynthesis. Catalyzes the formation of N(7)-methylguanine at position 46 (m7G46) in tRNA. In Ureaplasma parvum serovar 3 (strain ATCC 27815 / 27 / NCTC 11736), this protein is tRNA (guanine-N(7)-)-methyltransferase.